The sequence spans 75 residues: Protease B inhibitor 1 (75 aa).

A Phosphothreonine modification is found at Thr-74.

It belongs to the protease inhibitor I9 family. In terms of assembly, part of the heterodimeric LMA1 complex together with the thioredoxin II/TRX2. LMA1 binds to the ATPase SEC18.

It is found in the cytoplasm. Its subcellular location is the nucleus. In terms of biological role, cytosolic inhibitor of vacuolar proteinase B (yscB), probably regulating protease B activity during limited proteolysis. PBI2 is a component of the LMA1 complex, which is involved in the facilitation of vesicle fusion such as homotypic vacuole and ER-derived COPII vesicle fusion with the Golgi. This is Protease B inhibitor 1 (PBI2) from Saccharomyces cerevisiae (Baker's yeast).